Reading from the N-terminus, the 165-residue chain is MAKKPKSVKDTNNMVVASNRKARHNYSILETYEAGVALVGTEVKSLRDGTASLADAFATVDDGEIWLRNLHIPEYHHGSWTNHAPRRNRKLLMHRREIDNLVGKIRDGNLTLVPLSLYFTGGKVKVELALARGKQAHDKRQDMARRDAQREVTRELGRRVKGMTN.

Basic and acidic residues predominate over residues 135–158 (QAHDKRQDMARRDAQREVTRELGR). A disordered region spans residues 135-165 (QAHDKRQDMARRDAQREVTRELGRRVKGMTN).

Belongs to the SmpB family.

It localises to the cytoplasm. Required for rescue of stalled ribosomes mediated by trans-translation. Binds to transfer-messenger RNA (tmRNA), required for stable association of tmRNA with ribosomes. tmRNA and SmpB together mimic tRNA shape, replacing the anticodon stem-loop with SmpB. tmRNA is encoded by the ssrA gene; the 2 termini fold to resemble tRNA(Ala) and it encodes a 'tag peptide', a short internal open reading frame. During trans-translation Ala-aminoacylated tmRNA acts like a tRNA, entering the A-site of stalled ribosomes, displacing the stalled mRNA. The ribosome then switches to translate the ORF on the tmRNA; the nascent peptide is terminated with the 'tag peptide' encoded by the tmRNA and targeted for degradation. The ribosome is freed to recommence translation, which seems to be the essential function of trans-translation. The chain is SsrA-binding protein from Mycolicibacterium gilvum (strain PYR-GCK) (Mycobacterium gilvum (strain PYR-GCK)).